A 468-amino-acid polypeptide reads, in one-letter code: ATP synthase subunit beta (468 aa).

ATP is bound at residue 153-160; the sequence is GGAGVGKT.

It belongs to the ATPase alpha/beta chains family. As to quaternary structure, F-type ATPases have 2 components, CF(1) - the catalytic core - and CF(0) - the membrane proton channel. CF(1) has five subunits: alpha(3), beta(3), gamma(1), delta(1), epsilon(1). CF(0) has three main subunits: a(1), b(2) and c(9-12). The alpha and beta chains form an alternating ring which encloses part of the gamma chain. CF(1) is attached to CF(0) by a central stalk formed by the gamma and epsilon chains, while a peripheral stalk is formed by the delta and b chains.

It is found in the cell membrane. It catalyses the reaction ATP + H2O + 4 H(+)(in) = ADP + phosphate + 5 H(+)(out). Functionally, produces ATP from ADP in the presence of a proton gradient across the membrane. The catalytic sites are hosted primarily by the beta subunits. In Ligilactobacillus salivarius (strain UCC118) (Lactobacillus salivarius), this protein is ATP synthase subunit beta.